The sequence spans 58 residues: uncharacterized protein (58 aa).

4Fe-4S ferredoxin-type domains lie at 2–27 and 28–57; these read GIKI…IKTY and GVAI…VDTS. 8 residues coordinate [4Fe-4S] cluster: cysteine 9, cysteine 12, cysteine 15, cysteine 19, cysteine 37, cysteine 40, cysteine 43, and cysteine 47.

[4Fe-4S] cluster is required as a cofactor.

Ferredoxins are iron-sulfur proteins that transfer electrons probably in the CO-dehydrogenase complex. This is an uncharacterized protein from Methanocaldococcus jannaschii (strain ATCC 43067 / DSM 2661 / JAL-1 / JCM 10045 / NBRC 100440) (Methanococcus jannaschii).